The following is a 182-amino-acid chain: Bifunctional protein PyrR (182 aa).

Residues Ile-99–Thr-111 carry the PRPP-binding motif.

This sequence belongs to the purine/pyrimidine phosphoribosyltransferase family. PyrR subfamily. As to quaternary structure, homodimer and homohexamer; in equilibrium.

It carries out the reaction UMP + diphosphate = 5-phospho-alpha-D-ribose 1-diphosphate + uracil. In terms of biological role, regulates transcriptional attenuation of the pyrimidine nucleotide (pyr) operon by binding in a uridine-dependent manner to specific sites on pyr mRNA. This disrupts an antiterminator hairpin in the RNA and favors formation of a downstream transcription terminator, leading to a reduced expression of downstream genes. Functionally, also displays a weak uracil phosphoribosyltransferase activity which is not physiologically significant. In Caldicellulosiruptor saccharolyticus (strain ATCC 43494 / DSM 8903 / Tp8T 6331), this protein is Bifunctional protein PyrR.